Here is a 362-residue protein sequence, read N- to C-terminus: 3-ketodihydrosphingosine reductase gsl-3 (362 aa).

L55 contacts NADP(+). NADPH-binding residues include G58, S60, G62, and R83. The GXSXG motif lies at 58 to 62 (GASEG). NADP(+) is bound at residue N84. NADPH is bound by residues R87 and D113. NADP(+) contacts are provided by D113, R176, Y216, K220, I252, and S254. Y216 (proton acceptor) is an active-site residue. K220 (lowers pKa of active site Tyr) is an active-site residue. The helical transmembrane segment at 318-338 (NNWVLDTLMGWLIPIIYFFVL) threads the bilayer.

The protein belongs to the short-chain dehydrogenases/reductases (SDR) family.

The protein resides in the endoplasmic reticulum membrane. It catalyses the reaction sphinganine + NADP(+) = 3-oxosphinganine + NADPH + H(+). It participates in lipid metabolism; sphingolipid metabolism. Catalyzes the reduction of 3'-oxosphinganine (3-ketodihydrosphingosine/KDS) to sphinganine (dihydrosphingosine/DHS), the second step of de novo sphingolipid biosynthesis. The sequence is that of 3-ketodihydrosphingosine reductase gsl-3 (gsl-3) from Neurospora crassa (strain ATCC 24698 / 74-OR23-1A / CBS 708.71 / DSM 1257 / FGSC 987).